The following is a 499-amino-acid chain: Calcium/calmodulin-dependent protein kinase type II subunit delta (499 aa).

Position 2 is an N-acetylalanine (Ala-2). The Protein kinase domain maps to 14–272; that stretch reads YQLFEELGKG…ASEALKHPWI (259 aa). ATP-binding positions include 20-28 and Lys-43; that span reads LGKGAFSVV. Asp-136 (proton acceptor) is an active-site residue. The interval 283 to 292 is autoinhibitory domain; the sequence is HRQETVDCLK. The residue at position 287 (Thr-287) is a Phosphothreonine; by autocatalysis. Positions 291 to 301 are calmodulin-binding; it reads LKKFNARRKLK. Phosphothreonine; by autocatalysis is present on residues Thr-306 and Thr-307. Ser-315 is subject to Phosphoserine. Lys-318 bears the N6-acetyllysine mark. A phosphoserine mark is found at Ser-319 and Ser-330. Position 331 is a phosphothreonine (Thr-331). The residue at position 333 (Ser-333) is a Phosphoserine. Residues Thr-336 and Thr-337 each carry the phosphothreonine modification. Phosphoserine is present on residues Ser-404, Ser-490, and Ser-494.

It belongs to the protein kinase superfamily. CAMK Ser/Thr protein kinase family. CaMK subfamily. CAMK2 is composed of 4 different chains: alpha (CAMK2A), beta (CAMK2B), gamma (CAMK2G), and delta (CAMK2D). The different isoforms assemble into homo- or heteromultimeric holoenzymes composed of 12 subunits with two hexameric rings stacked one on top of the other. Interacts with RRAD and CACNB2. Autophosphorylation of Thr-287 following activation by Ca(2+)/calmodulin. Phosphorylation of Thr-287 locks the kinase into an activated state. In terms of tissue distribution, expressed in cardiac muscle and skeletal muscle. Isoform Delta 3, isoform Delta 2, isoform Delta 8 and isoform Delta 9 are expressed in cardiac muscle. Isoform Delta 11 is expressed in skeletal muscle.

It is found in the cell membrane. The protein localises to the sarcolemma. Its subcellular location is the sarcoplasmic reticulum membrane. The enzyme catalyses L-seryl-[protein] + ATP = O-phospho-L-seryl-[protein] + ADP + H(+). It catalyses the reaction L-threonyl-[protein] + ATP = O-phospho-L-threonyl-[protein] + ADP + H(+). Activated by Ca(2+)/calmodulin. Binding of calmodulin results in conformational change that relieves intrasteric autoinhibition and allows autophosphorylation of Thr-287 which turns the kinase in a constitutively active form and confers to the kinase a Ca(2+)-independent activity. Its function is as follows. Calcium/calmodulin-dependent protein kinase involved in the regulation of Ca(2+) homeostatis and excitation-contraction coupling (ECC) in heart by targeting ion channels, transporters and accessory proteins involved in Ca(2+) influx into the myocyte, Ca(2+) release from the sarcoplasmic reticulum (SR), SR Ca(2+) uptake and Na(+) and K(+) channel transport. Targets also transcription factors and signaling molecules to regulate heart function. In its activated form, is involved in the pathogenesis of dilated cardiomyopathy and heart failure. Contributes to cardiac decompensation and heart failure by regulating SR Ca(2+) release via direct phosphorylation of RYR2 Ca(2+) channel on 'Ser-2808'. In the nucleus, phosphorylates the MEF2 repressor HDAC4, promoting its nuclear export and binding to 14-3-3 protein, and expression of MEF2 and genes involved in the hypertrophic program. Is essential for left ventricular remodeling responses to myocardial infarction. In pathological myocardial remodeling acts downstream of the beta adrenergic receptor signaling cascade to regulate key proteins involved in ECC. Regulates Ca(2+) influx to myocytes by binding and phosphorylating the L-type Ca(2+) channel subunit beta-2 CACNB2. In addition to Ca(2+) channels, can target and regulate the cardiac sarcolemmal Na(+) channel Nav1.5/SCN5A and the K+ channel Kv4.3/KCND3, which contribute to arrhythmogenesis in heart failure. Phosphorylates phospholamban (PLN/PLB), an endogenous inhibitor of SERCA2A/ATP2A2, contributing to the enhancement of SR Ca(2+) uptake that may be important in frequency-dependent acceleration of relaxation (FDAR) and maintenance of contractile function during acidosis. May participate in the modulation of skeletal muscle function in response to exercise, by regulating SR Ca(2+) transport through phosphorylation of PLN/PLB and triadin, a ryanodine receptor-coupling factor. In response to interferon-gamma (IFN-gamma) stimulation, catalyzes phosphorylation of STAT1, stimulating the JAK-STAT signaling pathway. The polypeptide is Calcium/calmodulin-dependent protein kinase type II subunit delta (CAMK2D) (Homo sapiens (Human)).